We begin with the raw amino-acid sequence, 63 residues long: DNA-directed RNA polymerase 7 kDa subunit (63 aa).

The protein belongs to the poxviridae DNA-directed RNA polymerase 7 kDa subunit family. As to quaternary structure, the DNA-dependent RNA polymerase used for intermediate and late genes expression consists of eight subunits 147 kDa, 133 kDa, 35 kDa, 30 kDa, 22 kDa, 19 kDa, 18 kDa and 7 kDa totalling more than 500 kDa in mass. The same holoenzyme, with the addition of the transcription-specificity factor RAP94, is used for early gene expression.

It localises to the virion. The enzyme catalyses RNA(n) + a ribonucleoside 5'-triphosphate = RNA(n+1) + diphosphate. Part of the DNA-dependent RNA polymerase which catalyzes the transcription of viral DNA into RNA using the four ribonucleoside triphosphates as substrates. Responsible for the transcription of early, intermediate and late genes. DNA-dependent RNA polymerase associates with the early transcription factor (ETF) thereby allowing the early genes transcription. Late transcription, and probably also intermediate transcription, require newly synthesized RNA polymerase. In Molluscum contagiosum virus subtype 1 (MOCV), this protein is DNA-directed RNA polymerase 7 kDa subunit (RPO7).